A 143-amino-acid chain; its full sequence is Phosphoprotein 32 (143 aa).

The segment covering 1-14 (MESSNINALQQPSS) has biased composition (polar residues). The interval 1–32 (MESSNINALQQPSSIAHHPSKQCASSLNETVK) is disordered.

Belongs to the varicellovirus ORF32 protein family. Phosphorylated by ORF47 protein.

This is Phosphoprotein 32 from Homo sapiens (Human).